Reading from the N-terminus, the 128-residue chain is Sulfurtransferase TusD (128 aa).

C78 functions as the Cysteine persulfide intermediate in the catalytic mechanism.

The protein belongs to the DsrE/TusD family. In terms of assembly, heterohexamer, formed by a dimer of trimers. The hexameric TusBCD complex contains 2 copies each of TusB, TusC and TusD. The TusBCD complex interacts with TusE.

Its subcellular location is the cytoplasm. Its function is as follows. Part of a sulfur-relay system required for 2-thiolation of 5-methylaminomethyl-2-thiouridine (mnm(5)s(2)U) at tRNA wobble positions. Accepts sulfur from TusA and transfers it in turn to TusE. The polypeptide is Sulfurtransferase TusD (Escherichia coli (strain K12 / MC4100 / BW2952)).